A 372-amino-acid chain; its full sequence is uncharacterized protein (372 aa).

The N-terminal stretch at 1-19 (MKIFFLFIILLGIIQLSNS) is a signal peptide. The N-linked (GlcNAc...) asparagine glycan is linked to asparagine 18. Residues 20–160 (SSCNIDIAGD…IWTTKYSCAI (141 aa)) form the MRH domain. Residues cysteine 22 and cysteine 58 are joined by a disulfide bond. An N-linked (GlcNAc...) asparagine glycan is attached at asparagine 59. Cysteine 128 and cysteine 158 are oxidised to a cystine. Residues 185 to 282 (NEILNEAQSN…VQFNDDIKLI (98 aa)) adopt a coiled-coil conformation. A disordered region spans residues 201–233 (KNEDLNNNNNNNNNNNNNNNNNNNNNNNNNKIN). A compositionally biased stretch (low complexity) spans 206–230 (NNNNNNNNNNNNNNNNNNNNNNNNN).

Its subcellular location is the secreted. This is an uncharacterized protein from Dictyostelium discoideum (Social amoeba).